Here is a 447-residue protein sequence, read N- to C-terminus: UDP-glycosyltransferase 79B10 (447 aa).

UDP-alpha-D-glucose-binding positions include S260, V319–Q321, H336–E344, and L358–Q361.

It belongs to the UDP-glycosyltransferase family.

The chain is UDP-glycosyltransferase 79B10 (UGT79B10) from Arabidopsis thaliana (Mouse-ear cress).